The sequence spans 83 residues: Small ribosomal subunit protein bS16 (83 aa).

This sequence belongs to the bacterial ribosomal protein bS16 family.

The sequence is that of Small ribosomal subunit protein bS16 from Pseudomonas fluorescens (strain ATCC BAA-477 / NRRL B-23932 / Pf-5).